We begin with the raw amino-acid sequence, 142 residues long: Gonadotropin subunit beta-2 (142 aa).

Positions 1–23 are cleaved as a signal peptide; that stretch reads MLGLHVGTLISLFLCILLEPVEG. 6 disulfide bridges follow: C29–C77, C43–C92, C46–C130, C54–C108, C58–C110, and C113–C120. A glycan (N-linked (GlcNAc...) asparagine) is linked at N33.

It belongs to the glycoprotein hormones subunit beta family. Heterodimer of an alpha and a beta chain.

It localises to the secreted. Functionally, involved in gametogenesis and steroidogenesis. This chain is Gonadotropin subunit beta-2 (cgbb), found in Oncorhynchus keta (Chum salmon).